The chain runs to 333 residues: Neuropeptides B/W receptor type 2 (333 aa).

At M1–Y45 the chain is on the extracellular side. 3 N-linked (GlcNAc...) asparagine glycosylation sites follow: N24, N29, and N34. A helical membrane pass occupies residues V46–V69. Residues I70 to T80 lie on the Cytoplasmic side of the membrane. The chain crosses the membrane as a helical span at residues N81–H105. Residues L106–V120 lie on the Extracellular side of the membrane. Residues C117 and C197 are joined by a disulfide bond. A helical membrane pass occupies residues L121–V140. At D141–V165 the chain is on the cytoplasmic side. A helical membrane pass occupies residues A166 to A185. The Extracellular portion of the chain corresponds to G186–A211. Residues S212 to T233 form a helical membrane-spanning segment. Residues D234 to K257 lie on the Cytoplasmic side of the membrane. A helical transmembrane segment spans residues V258–V282. Topologically, residues A283–P292 are extracellular. The helical transmembrane segment at L293–A307 threads the bilayer. Over N308–C333 the chain is Cytoplasmic.

This sequence belongs to the G-protein coupled receptor 1 family. In terms of tissue distribution, detected at high levels in caudate nucleus, hippocampus and amygdala; at moderate levels in the adult brain, thalamus, parietal cortex, pituitary gland, adrenal gland and lymph nodes.

The protein resides in the cell membrane. Its function is as follows. Interacts specifically with a number of opioid ligands. Receptor for neuropeptides B and W, which may be involved in neuroendocrine system regulation, food intake and the organization of other signals. This Homo sapiens (Human) protein is Neuropeptides B/W receptor type 2 (NPBWR2).